Consider the following 522-residue polypeptide: MASGGGGCSASERLPPPFPGLEPESEGAAGGSEPEAGDSDTEGEDIFTGAAVVSKHQSPKRTTSLLPINNGSKENGIHEEQDQEPQDLFADATVELSLDNTQNNQKKVPAKTLISLPPQEAPNSSKHQPTYEELEEEEQEDQFDLTVGITDPEKIGDGMNAYVAYKVTTQTSLPLFRSKQFAVKRRFSDFLGLYEKLSEKHSQNGFIVPPPPEKSLIGMTKVKVGKEDSSSAEFLEKRRAALERYLQRIVNHPTMLQDPDVREFLEKEELPRAVGTQTLSGAGLLKMFNKATDAVSKMTIKMNESDIWFEEKLQEVECEEQRLRKLHAVVETLVNHRKELALNTAQFAKSLAMLGSSEDNTALSRALSQLAEVEEKIEQLHQEQANNDFFLLAELLSDYIRLLAIVRAAFDQRMKTWQRWQDAQATLQKKREAEARLLWANKPDKLQQAKDEILEWESRVTQYERDFERISTVVRKEVMRFEKEKSKDFKNHVIKYLETLLYSQQQLAKYWEAFLPEAKAIS.

Disordered stretches follow at residues 1-89 and 115-142; these read MASG…QDLF and SLPP…QEDQ. Phosphoserine occurs at positions 32 and 39. The span at 35 to 45 shows a compositional bias: acidic residues; sequence EAGDSDTEGED. Residues Thr-41 and Thr-48 each carry the phosphothreonine modification. 2 positions are modified to phosphoserine: Ser-58 and Ser-72. A compositionally biased stretch (polar residues) spans 60–73; it reads KRTTSLLPINNGSK. Residues 132–142 are compositionally biased toward acidic residues; that stretch reads EELEEEEQEDQ. The PX domain maps to 143–272; the sequence is FDLTVGITDP…EFLEKEELPR (130 aa). Positions 186, 188, and 214 each coordinate a 1,2-diacyl-sn-glycero-3-phospho-(1D-myo-inositol-3-phosphate). Position 188 is a phosphoserine (Ser-188). Position 237 is an N6-acetyllysine (Lys-237). Arg-238 provides a ligand contact to a 1,2-diacyl-sn-glycero-3-phospho-(1D-myo-inositol-3-phosphate). At Ser-280 the chain carries Phosphoserine. The interval 281 to 298 is membrane-binding amphipathic helix; sequence GAGLLKMFNKATDAVSKM. In terms of domain architecture, BAR spans 302 to 522; the sequence is MNESDIWFEE…AFLPEAKAIS (221 aa).

The protein belongs to the sorting nexin family. Predominantly forms heterodimers with BAR domain-containing sorting nexins SNX5, SNX6 and SNX32; can self-associate to form homodimers. The heterodimers are proposed to self-assemble into helical arrays on the membrane to stabilize and expand local membrane curvature underlying endosomal tubule formation. Thought to be a component of the originally described retromer complex (also called SNX-BAR retromer) which is a pentamer containing the heterotrimeric retromer cargo-selective complex (CSC), also described as vacuolar protein sorting subcomplex (VPS) and a heterodimeric membrane-deforming subcomplex formed between SNX1 or SNX2 and SNX5 or SNX6 (also called SNX-BAR subcomplex); the respective CSC and SNX-BAR subcomplexes associate with low affinity. Interacts with SNX5, SNX6, SNX32, VPS26A, VPS29, VPS35, DRD5, DENND5A, KALRN, RHOG (GDP-bound form). The interaction with SNX2 is reported controversially. Interacts with DNAJC13; prevented by presence of HGS. Interacts with HGS.

It is found in the endosome membrane. The protein localises to the golgi apparatus. The protein resides in the trans-Golgi network membrane. Its subcellular location is the early endosome membrane. It localises to the cell projection. It is found in the lamellipodium. In terms of biological role, involved in several stages of intracellular trafficking. Interacts with membranes containing phosphatidylinositol 3-phosphate (PtdIns(3P)) or phosphatidylinositol 3,5-bisphosphate (PtdIns(3,5)P2). Acts in part as component of the retromer membrane-deforming SNX-BAR subcomplex. The SNX-BAR retromer mediates retrograde transport of cargo proteins from endosomes to the trans-Golgi network (TGN) and is involved in endosome-to-plasma membrane transport for cargo protein recycling. The SNX-BAR subcomplex functions to deform the donor membrane into a tubular profile called endosome-to-TGN transport carrier (ETC). Can sense membrane curvature and has in vitro vesicle-to-membrane remodeling activity. Involved in retrograde endosome-to-TGN transport of lysosomal enzyme receptors (IGF2R, M6PR and SORT1). Plays a role in targeting ligand-activated EGFR to the lysosomes for degradation after endocytosis from the cell surface and release from the Golgi. Involvement in retromer-independent endocytic trafficking of P2RY1 and lysosomal degradation of protease-activated receptor-1/F2R. Promotes KALRN- and RHOG-dependent but retromer-independent membrane remodeling such as lamellipodium formation; the function is dependent on GEF activity of KALRN. Required for endocytosis of DRD5 upon agonist stimulation but not for basal receptor trafficking. The protein is Sorting nexin-1 (SNX1) of Macaca fascicularis (Crab-eating macaque).